The chain runs to 425 residues: NAC transcription factor ONAC010 (425 aa).

Over residues methionine 1–serine 10 the composition is skewed to polar residues. The segment at methionine 1–arginine 34 is disordered. Residues proline 12 to proline 23 show a composition bias toward low complexity. Residues leucine 29–lysine 200 enclose the NAC domain. A DNA-binding region spans residues valine 129–alanine 206.

The protein localises to the nucleus. Its function is as follows. Transcription factor of the NAC family associated with male fertility. The protein is NAC transcription factor ONAC010 (ONAC010) of Oryza sativa subsp. indica (Rice).